The following is a 404-amino-acid chain: MDAEHFPVGFFRWDQRPAPVVAAAAAPTTTVFNKDHGRPLEVILPMNGRKDLKSLEDLFKEYGVRYVTLAKMTEMGFTANTLVNMTEEEIEDLMKTLVELYHMDLLIGERYGIKSAIRAEKKRLQDSLEMQRLEILSEAERKRILHDDQNTFAAAMASEGTSKELRANDPLIFPESTSADHAPMNIASCKDSTLILQNSNQAQFCGSGLIGVPEHSSESDERKADTNKQKRRRSKEPGEDGEDRPREHPFIVTEPGELARGKKNGLDYLFDLYEQCGKFLLEVQRIAKEKGEKCPTKVTNQVFRHAKHNGAVYINKPKMRHYVHCYALHCLDSEQSNHLRRLYKERGENVGAWRQACYYPLVAIARENNWDIEGIFNRNEKLKIWYVPTKLRQLCHMERSKECQ.

Residues 210–251 are disordered; it reads IGVPEHSSESDERKADTNKQKRRRSKEPGEDGEDRPREHPFI. Composition is skewed to basic and acidic residues over residues 215–228 and 235–249; these read HSSE…DTNK and KEPG…REHP. DNA-binding regions lie at residues 246–250, 315–322, and 386–389; these read REHPF, NKPKMRHY, and YVPT.

The protein belongs to the FLO/LFY family. Expressed in both male and female cones, vegetative buds and needles, but not in the roots.

It localises to the nucleus. Functionally, probable transcription factor. This chain is Floricaula/leafy-like protein FL1, found in Pinus radiata (Monterey pine).